A 347-amino-acid chain; its full sequence is Phenylalanine--tRNA ligase alpha subunit (347 aa).

Position 265 (E265) interacts with Mg(2+).

It belongs to the class-II aminoacyl-tRNA synthetase family. Phe-tRNA synthetase alpha subunit type 1 subfamily. Tetramer of two alpha and two beta subunits. The cofactor is Mg(2+).

It is found in the cytoplasm. It carries out the reaction tRNA(Phe) + L-phenylalanine + ATP = L-phenylalanyl-tRNA(Phe) + AMP + diphosphate + H(+). This Wolbachia sp. subsp. Brugia malayi (strain TRS) protein is Phenylalanine--tRNA ligase alpha subunit.